Reading from the N-terminus, the 373-residue chain is Anhydro-N-acetylmuramic acid kinase (373 aa).

G12–D19 serves as a coordination point for ATP.

It belongs to the anhydro-N-acetylmuramic acid kinase family.

The enzyme catalyses 1,6-anhydro-N-acetyl-beta-muramate + ATP + H2O = N-acetyl-D-muramate 6-phosphate + ADP + H(+). The protein operates within amino-sugar metabolism; 1,6-anhydro-N-acetylmuramate degradation. It functions in the pathway cell wall biogenesis; peptidoglycan recycling. In terms of biological role, catalyzes the specific phosphorylation of 1,6-anhydro-N-acetylmuramic acid (anhMurNAc) with the simultaneous cleavage of the 1,6-anhydro ring, generating MurNAc-6-P. Is required for the utilization of anhMurNAc either imported from the medium or derived from its own cell wall murein, and thus plays a role in cell wall recycling. The protein is Anhydro-N-acetylmuramic acid kinase of Erwinia tasmaniensis (strain DSM 17950 / CFBP 7177 / CIP 109463 / NCPPB 4357 / Et1/99).